The following is a 270-amino-acid chain: 3-phenylpropionate-dihydrodiol/cinnamic acid-dihydrodiol dehydrogenase (270 aa).

Position 10 to 34 (10 to 34 (FITGGGSGLGLALVERFIEEGAQVA)) interacts with NAD(+). A substrate-binding site is contributed by Ser-143. Tyr-156 serves as the catalytic Proton acceptor.

Belongs to the short-chain dehydrogenases/reductases (SDR) family.

The catalysed reaction is 3-(cis-5,6-dihydroxycyclohexa-1,3-dien-1-yl)propanoate + NAD(+) = 3-(2,3-dihydroxyphenyl)propanoate + NADH + H(+). It carries out the reaction (2E)-3-(cis-5,6-dihydroxycyclohexa-1,3-dien-1-yl)prop-2-enoate + NAD(+) = (2E)-3-(2,3-dihydroxyphenyl)prop-2-enoate + NADH + H(+). Its pathway is aromatic compound metabolism; 3-phenylpropanoate degradation. Functionally, converts 3-phenylpropionate-dihydrodiol (PP-dihydrodiol) and cinnamic acid-dihydrodiol (CI-dihydrodiol) into 3-(2,3-dihydroxylphenyl)propanoic acid (DHPP) and 2,3-dihydroxicinnamic acid (DHCI), respectively. The chain is 3-phenylpropionate-dihydrodiol/cinnamic acid-dihydrodiol dehydrogenase from Escherichia coli O17:K52:H18 (strain UMN026 / ExPEC).